We begin with the raw amino-acid sequence, 151 residues long: Deoxyuridine 5'-triphosphate nucleotidohydrolase (151 aa).

Substrate-binding positions include 70 to 72, Asn-83, 87 to 89, and Met-97; these read RSG and LID.

The protein belongs to the dUTPase family. Mg(2+) serves as cofactor.

It catalyses the reaction dUTP + H2O = dUMP + diphosphate + H(+). It functions in the pathway pyrimidine metabolism; dUMP biosynthesis; dUMP from dCTP (dUTP route): step 2/2. Its function is as follows. This enzyme is involved in nucleotide metabolism: it produces dUMP, the immediate precursor of thymidine nucleotides and it decreases the intracellular concentration of dUTP so that uracil cannot be incorporated into DNA. The protein is Deoxyuridine 5'-triphosphate nucleotidohydrolase of Yersinia enterocolitica serotype O:8 / biotype 1B (strain NCTC 13174 / 8081).